The sequence spans 88 residues: UPF0250 protein Swoo_3713 (88 aa).

This sequence belongs to the UPF0250 family.

This chain is UPF0250 protein Swoo_3713, found in Shewanella woodyi (strain ATCC 51908 / MS32).